The sequence spans 402 residues: Putative neuropeptide Y receptor 11 (402 aa).

Residues 1 to 45 are Extracellular-facing; sequence MGSVNESCDNYVEIFNKINYFFRDDQVINGTEYSPKEFGYFITFA. N-linked (GlcNAc...) asparagine glycosylation is found at Asn-5 and Asn-29. The chain crosses the membrane as a helical span at residues 46–66; sequence YMLIILFGAIGNFLTIIVVIL. The Cytoplasmic segment spans residues 67-85; the sequence is NPAMRTTRNFFILNLALSD. Residues 86-106 form a helical membrane-spanning segment; that stretch reads FFVCIVTAPTTLYTVLYMFWP. Over 107–122 the chain is Extracellular; sequence FSRTLCKIAGSLQGFN. Cys-112 and Cys-194 are oxidised to a cystine. Residues 123–143 traverse the membrane as a helical segment; the sequence is IFLSTFSIASIAVDRYVLIIF. Residues 144-152 are Cytoplasmic-facing; sequence PTKRERQQN. The helical transmembrane segment at 153 to 173 threads the bilayer; sequence LSFCFFIMIWVISLILAVPLL. Residues 174–210 are Extracellular-facing; the sequence is QASDLTPVFVEPSCDLALYICHEQNEIWEKMIISKGT. A helical membrane pass occupies residues 211-231; that stretch reads YTLAVLITQYAFPLFSLVFAY. The Cytoplasmic portion of the chain corresponds to 232 to 272; sequence SRIAHRMKLRFANRNQNVTTNTNTSQRRRSVVERQRRTHLL. Residues 273 to 293 form a helical membrane-spanning segment; that stretch reads LVCVVAVFAVAWLPLNVFHIF. Over 294 to 306 the chain is Extracellular; the sequence is NTFELVNSFSVTT. Residues 307-328 traverse the membrane as a helical segment; that stretch reads FSICHCLAMCSACLNPLIYAFF. Residues 329–402 lie on the Cytoplasmic side of the membrane; it reads NHNFRIEFMH…LSAMEQDEQL (74 aa).

Belongs to the G-protein coupled receptor 1 family.

Its subcellular location is the cell membrane. Functionally, could be a receptor for neuropeptide Y and peptide YY. The chain is Putative neuropeptide Y receptor 11 (npr-11) from Caenorhabditis elegans.